The sequence spans 229 residues: 23 kDa piroplasm membrane protein (229 aa).

A signal peptide spans Met1–Ser19. Residues Ser20 to Tyr203 lie on the Extracellular side of the membrane. A helical membrane pass occupies residues Val204–Val224. Residues Lys225–Lys229 lie on the Cytoplasmic side of the membrane.

The protein resides in the membrane. In Theileria annulata, this protein is 23 kDa piroplasm membrane protein.